The sequence spans 241 residues: uncharacterized protein (241 aa).

Positions 147–212 (FSYRSVILTL…EMYAWINSAQ (66 aa)) constitute an HTH luxR-type domain.

This is an uncharacterized protein from Escherichia coli O157:H7.